The sequence spans 391 residues: Nucleosome assembly protein 1-like 1 (391 aa).

Residues 1 to 10 are compositionally biased toward basic and acidic residues; it reads MADIDNKEQS. The disordered stretch occupies residues 1–32; sequence MADIDNKEQSELDQDLDDVEEVEEEETGEETK. Ala2 is subject to N-acetylalanine. Ser10 bears the Phosphoserine mark. A compositionally biased stretch (acidic residues) spans 11–28; it reads ELDQDLDDVEEVEEEETG. Phosphothreonine is present on residues Thr62 and Thr64. A Phosphoserine modification is found at Ser69. An N6-acetyllysine modification is found at Lys116. An NAP1L motif motif is present at residues 125–150; the sequence is YEPTEEECEWKPDEEDEISEELKEKA. Positions 132-143 are enriched in acidic residues; the sequence is CEWKPDEEDEIS. The interval 132 to 163 is disordered; it reads CEWKPDEEDEISEELKEKAKVEDEKKDEEKED. Residue Ser143 is modified to Phosphoserine. Positions 144–163 are enriched in basic and acidic residues; it reads EELKEKAKVEDEKKDEEKED. Positions 273–279 match the Nuclear localization signal motif; that stretch reads IKKKQKH. The disordered stretch occupies residues 345–391; the sequence is EAIEDDDDDYDEEGEEADEEGEEEGDEENDPDYDPKKDQNPAECKQQ. The span at 346 to 376 shows a compositional bias: acidic residues; sequence AIEDDDDDYDEEGEEADEEGEEEGDEENDPD. 2 positions are modified to 5-glutamyl polyglycine: Glu359 and Glu360. The segment covering 377–391 has biased composition (basic and acidic residues); the sequence is YDPKKDQNPAECKQQ. Cys388 bears the Cysteine methyl ester mark. Residue Cys388 is the site of S-farnesyl cysteine attachment. A propeptide spans 389–391 (removed in mature form); that stretch reads KQQ.

Belongs to the nucleosome assembly protein (NAP) family. As to quaternary structure, homodimer. The dimer binds strongly and sequentially to single and double H2A-H2B heterodimers. Interacts with ERCC6; this interaction increases ERCC6 processivity. Interacts with RAD54. Interacts with SETD1A. Post-translationally, polyglycylated by TTLL10 on glutamate residues, resulting in polyglycine chains on the gamma-carboxyl group. Both polyglutamylation and polyglycylation modifications can coexist on the same protein on adjacent residues, and lowering polyglycylation levels increases polyglutamylation, and reciprocally. Polyglutamylated by TTLL4 on glutamate residues, resulting in polyglutamate chains on the gamma-carboxyl group. Both polyglutamylation and polyglycylation modifications can coexist on the same protein on adjacent residues, and lowering polyglycylation levels increases polyglutamylation, and reciprocally.

Its subcellular location is the nucleus. The protein localises to the melanosome. It localises to the cytoplasm. Functionally, histone chaperone that plays a role in the nuclear import of H2A-H2B and nucleosome assembly. Also participates in several important DNA repair mechanisms: greatly enhances ERCC6-mediated chromatin remodeling which is essential for transcription-coupled nucleotide excision DNA repair. Also stimulates homologous recombination (HR) by RAD51 and RAD54 which is essential in mitotic DNA double strand break (DSB) repair. Plays a key role in the regulation of embryonic neurogenesis. Promotes the proliferation of neural progenitors and inhibits neuronal differentiation during cortical development. Regulates neurogenesis via the modulation of RASSF10; regulates RASSF10 expression by promoting SETD1A-mediated H3K4 methylation at the RASSF10 promoter. This chain is Nucleosome assembly protein 1-like 1 (NAP1L1), found in Bos taurus (Bovine).